The following is a 204-amino-acid chain: DNA-binding transcriptional activator EvgA (204 aa).

Residues 2–117 (NAIIIDDHPL…NIIAAIEAAK (116 aa)) enclose the Response regulatory domain. At D52 the chain carries 4-aspartylphosphate. The HTH luxR-type domain occupies 137–202 (DQQKLDSLSK…DLYTFAQRNK (66 aa)). The H-T-H motif DNA-binding region spans 161–180 (NNDIAEKMFISNKTVSTYKS).

In terms of assembly, homodimer. In terms of processing, phosphorylated by EvgS.

The protein resides in the cytoplasm. Member of the two-component regulatory system EvgS/EvgA. Regulates the expression of emrKY operon and yfdX. Also seems to control expression of at least one other multidrug efflux operon. This chain is DNA-binding transcriptional activator EvgA (evgA), found in Escherichia coli O157:H7.